We begin with the raw amino-acid sequence, 214 residues long: uncharacterized protein (214 aa).

A run of 5 helical transmembrane segments spans residues 18 to 38, 51 to 71, 80 to 100, 108 to 128, and 145 to 165; these read LLLL…NTFV, DLAL…IVAG, ILVL…VLLV, LLVL…AFNV, and FFGV…GYII.

Its subcellular location is the cell membrane. This is an uncharacterized protein from Geobacillus stearothermophilus (Bacillus stearothermophilus).